A 348-amino-acid chain; its full sequence is [FeFe] hydrogenase maturase subunit HydE (348 aa).

In terms of domain architecture, Radical SAM core spans 49–268 (DEVHIRAIIE…LLPDSNIPAT (220 aa)). 3 residues coordinate [4Fe-4S] cluster: Cys63, Cys67, and Cys70. [2Fe-2S] cluster is bound by residues Cys311, Cys319, and Cys322.

The protein belongs to the radical SAM superfamily. HydE family. As to quaternary structure, monomer. [4Fe-4S] cluster is required as a cofactor. [2Fe-2S] cluster serves as cofactor.

Its function is as follows. Required for the maturation of the [FeFe]-hydrogenase HydA. Catalyzes the reductive cleavage of S-adenosyl-L-methionine (in vitro), suggesting it may contribute to the biosynthesis of an essential sulfur-containing ligand that binds to the hydrogenase active site [2Fe-2S] cluster. In Thermotoga maritima (strain ATCC 43589 / DSM 3109 / JCM 10099 / NBRC 100826 / MSB8), this protein is [FeFe] hydrogenase maturase subunit HydE.